The sequence spans 265 residues: Palmitoyltransferase ZDHHC21 (265 aa).

Over 1–16 the chain is Cytoplasmic; that stretch reads MGLRIHFVVDPHGWCC. A helical transmembrane segment spans residues 17–37; that stretch reads MGLIVFVWLYNIVIIPKIVLF. Topologically, residues 38 to 44 are extracellular; the sequence is PHYEEGH. A helical transmembrane segment spans residues 45-65; the sequence is IPGILIIIFYGISIFCLVALV. At 66-133 the chain is on the cytoplasmic side; the sequence is RASLTDPGRL…NNCVGEDNHW (68 aa). In terms of domain architecture, DHHC spans 90 to 140; it reads ELCNKCNLMRPKRSHHCSRCGHCVRRMDHHCPWINNCVGEDNHWLFLQLCF. C120 functions as the S-palmitoyl cysteine intermediate in the catalytic mechanism. Residues 134 to 154 form a helical membrane-spanning segment; that stretch reads LFLQLCFYTELLTCYALMFSF. Residues 155-185 are Extracellular-facing; the sequence is CHYYYFLPLKKRNLDLFVVRHELAIMRLAAF. A helical membrane pass occupies residues 186–206; sequence MGITMLVGITGLFYTQLIGII. Residues 207-265 lie on the Cytoplasmic side of the membrane; it reads TDTTSIEKMSNCCEEISRPRKPWQQTFSEVFGTRWKILWFIPFRQRQPLRVPYHFANHV.

The protein belongs to the DHHC palmitoyltransferase family. As to expression, widely expressed. Expressed in Henle's layer within the hair bulb and the hair shaft cuticle (at protein level). Expression is limited to the post-mitotic lineages of inner root sheath (IRS) and cuticle.

It is found in the golgi apparatus membrane. Its subcellular location is the golgi apparatus. The protein resides in the cis-Golgi network membrane. The protein localises to the cell membrane. The catalysed reaction is L-cysteinyl-[protein] + hexadecanoyl-CoA = S-hexadecanoyl-L-cysteinyl-[protein] + CoA. Functionally, palmitoyltransferase that catalyzes the addition of palmitate onto various protein substrates. Palmitoylates sex steroid hormone receptors, including ESR1, PGR and AR, thereby regulating their targeting to the plasma membrane. This affects rapid intracellular signaling by sex hormones via ERK and AKT kinases and the generation of cAMP, but does not affect that mediated by their nuclear receptor. Palmitoylates FYN, regulates its localization in hair follicles and plays a key role in epidermal homeostasis and hair follicle differentiation. Through the palmitoylation of PLCB1 and the regulation of PLCB1 downstream signaling may indirectly regulate the function of the endothelial barrier and the adhesion of leukocytes to the endothelium. Also has a palmitoyltransferase activity toward ADRA1D, positively regulating its activity and expression and may thereby play a role in vascular contraction. May also palmitoylate eNOS and LCK. The protein is Palmitoyltransferase ZDHHC21 of Mus musculus (Mouse).